The chain runs to 575 residues: 4-substituted benzoates-glutamate ligase GH3.12 (575 aa).

Residues aspartate 6–isoleucine 33 adopt a coiled-coil conformation. Serine 95–serine 96 provides a ligand contact to AMP. Residue tyrosine 120–arginine 123 participates in salicylate binding. Positions 301, 324, 328, 347, 398, and 417 each coordinate AMP.

The protein belongs to the IAA-amido conjugating enzyme family. In terms of assembly, interacts with the P.syringae pv. maculicola effector HopW1-1 (via C-terminus). Expressed in seedlings, mostly in cotyledons, leaves, hypocotyls and sporadically in roots. Not detected in unchallenged adult plants, except in flowers.

With respect to regulation, specifically and reversibly inhibited by salicylic acid (SA). Its function is as follows. Catalyzes the conjugation of specific amino acids (e.g. Glu and possibly His, Lys, and Met) to their preferred acyl substrates (e.g. 4-substituted benzoates), in a magnesium ion- and ATP-dependent manner. Can use 4-substituted benzoates such as 4-aminobenzoate (pABA), 4-fluorobenzoate and 4-hydroxybenzoate (4-HBA), and, to a lesser extent, benzoate, vanillate and trans-cinnamate, but not 2-substituted benzoates and salicylic acid (SA), as conjugating acyl substrates. Involved in both basal and induced resistance in a SA-dependent manner. Confers resistance to virulent and avirulent pathogens (at least bacteria and oomycetes), and promotes SA glucosides accumulation. Required for the establishment of hyper-sensitive response (HR) upon incompatible interaction and subsequent systemic acquired resistance (SAR). This chain is 4-substituted benzoates-glutamate ligase GH3.12 (GH3.12), found in Arabidopsis thaliana (Mouse-ear cress).